A 270-amino-acid chain; its full sequence is Myelin protein zero-like protein 1 (270 aa).

The signal sequence occupies residues methionine 1–isoleucine 35. Positions serine 36 to arginine 151 constitute an Ig-like V-type domain. Topologically, residues serine 36–valine 162 are extracellular. Asparagine 50 and asparagine 130 each carry an N-linked (GlcNAc...) asparagine glycan. Cysteine 58 and cysteine 135 are disulfide-bonded. Residues phenylalanine 163–isoleucine 183 form a helical membrane-spanning segment. The Cytoplasmic segment spans residues serine 184 to aspartate 270. Residues threonine 201–asparagine 257 form a disordered region. 4 positions are modified to phosphoserine: serine 204, serine 206, serine 210, and serine 221. The ITIM motif 1 signature appears at valine 240–leucine 245. Tyrosine 242 is subject to Phosphotyrosine. Position 261 is a phosphoserine (serine 261). Positions valine 262–isoleucine 267 match the ITIM motif 2 motif. Tyrosine 264 is subject to Phosphotyrosine.

It belongs to the myelin P0 protein family. As to quaternary structure, interacts with phosphorylated PTPN11/SHP-2. Post-translationally, phosphorylated on tyrosine residues upon stimulation with pervanadate and concanavalin-A (ConA). Phosphorylation at Tyr-242 and Tyr-264 is required for interaction with PTPN11/SHP-2. Dephosphorylated by PTPN11/SHP-2 (in vitro).

The protein localises to the membrane. Cell surface receptor, which is involved in signal transduction processes. Recruits PTPN11/SHP-2 to the cell membrane and is a putative substrate of PTPN11/SHP-2. Is a major receptor for concanavalin-A (ConA) and is involved in cellular signaling induced by ConA, which probably includes Src family tyrosine-protein kinases. Isoform 2 seems to have a dominant negative role; it blocks tyrosine phosphorylation of MPZL1 induced by ConA. Isoform 1, but not isoform 2, may be involved in regulation of integrin-mediated cell motility. The protein is Myelin protein zero-like protein 1 (Mpzl1) of Mus musculus (Mouse).